The sequence spans 205 residues: Recombination protein RecR (205 aa).

The C4-type zinc finger occupies 64–79 (CSRCYFITQGDLCAIC). Positions 87-182 (RVICVVEEPL…RVTRLARGLP (96 aa)) constitute a Toprim domain.

This sequence belongs to the RecR family.

May play a role in DNA repair. It seems to be involved in an RecBC-independent recombinational process of DNA repair. It may act with RecF and RecO. The sequence is that of Recombination protein RecR from Roseiflexus sp. (strain RS-1).